Consider the following 324-residue polypeptide: Elongation factor P--(R)-beta-lysine ligase (324 aa).

75-77 (SPE) serves as a coordination point for substrate. Residues 99-101 (RNK) and asparagine 108 contribute to the ATP site. Tyrosine 117 contributes to the substrate binding site. Residue 243-244 (EL) coordinates ATP. Glutamate 250 is a binding site for substrate. Glycine 299 lines the ATP pocket.

The protein belongs to the class-II aminoacyl-tRNA synthetase family. EpmA subfamily. As to quaternary structure, homodimer.

The enzyme catalyses D-beta-lysine + L-lysyl-[protein] + ATP = N(6)-((3R)-3,6-diaminohexanoyl)-L-lysyl-[protein] + AMP + diphosphate + H(+). Its function is as follows. With EpmB is involved in the beta-lysylation step of the post-translational modification of translation elongation factor P (EF-P). Catalyzes the ATP-dependent activation of (R)-beta-lysine produced by EpmB, forming a lysyl-adenylate, from which the beta-lysyl moiety is then transferred to the epsilon-amino group of a conserved specific lysine residue in EF-P. The chain is Elongation factor P--(R)-beta-lysine ligase from Buchnera aphidicola subsp. Acyrthosiphon pisum (strain APS) (Acyrthosiphon pisum symbiotic bacterium).